A 449-amino-acid chain; its full sequence is Exodeoxyribonuclease 7 large subunit (449 aa).

This sequence belongs to the XseA family. Heterooligomer composed of large and small subunits.

The protein resides in the cytoplasm. It catalyses the reaction Exonucleolytic cleavage in either 5'- to 3'- or 3'- to 5'-direction to yield nucleoside 5'-phosphates.. Its function is as follows. Bidirectionally degrades single-stranded DNA into large acid-insoluble oligonucleotides, which are then degraded further into small acid-soluble oligonucleotides. The sequence is that of Exodeoxyribonuclease 7 large subunit from Aliivibrio fischeri (strain MJ11) (Vibrio fischeri).